A 651-amino-acid polypeptide reads, in one-letter code: Beta-glucuronidase (651 aa).

Residues 1-22 form the signal peptide; sequence MSRGPAGAWVALGPLLWTCGLA. 2 N-linked (GlcNAc...) asparagine glycosylation sites follow: N172 and N419. Catalysis depends on E450, which acts as the Proton donor. A glycan (N-linked (GlcNAc...) asparagine) is linked at N630.

This sequence belongs to the glycosyl hydrolase 2 family. As to quaternary structure, homotetramer.

It is found in the lysosome. The catalysed reaction is a beta-D-glucuronoside + H2O = D-glucuronate + an alcohol. With respect to regulation, inhibited by L-aspartic acid. Functionally, plays an important role in the degradation of dermatan and keratan sulfates. In Canis lupus familiaris (Dog), this protein is Beta-glucuronidase (GUSB).